The chain runs to 126 residues: Protein ApaG (126 aa).

The region spanning 2–126 is the ApaG domain; it reads SDSRYKVDVS…FRLAVPGSLH (125 aa).

The protein is Protein ApaG of Pseudomonas syringae pv. tomato (strain ATCC BAA-871 / DC3000).